Here is a 105-residue protein sequence, read N- to C-terminus: Small ribosomal subunit protein eS10A (105 aa).

This sequence belongs to the eukaryotic ribosomal protein eS10 family. As to quaternary structure, component of the small ribosomal subunit (SSU). Mature yeast ribosomes consist of a small (40S) and a large (60S) subunit. The 40S small subunit contains 1 molecule of ribosomal RNA (18S rRNA) and 33 different proteins (encoded by 57 genes). The large 60S subunit contains 3 rRNA molecules (25S, 5.8S and 5S rRNA) and 46 different proteins (encoded by 81 genes). eS10 interacts with GCN1 (via middle region); this interaction is direct and promotes GCN2 kinase activity. The N-terminus is not modified.

It localises to the cytoplasm. Component of the ribosome, a large ribonucleoprotein complex responsible for the synthesis of proteins in the cell. The small ribosomal subunit (SSU) binds messenger RNAs (mRNAs) and translates the encoded message by selecting cognate aminoacyl-transfer RNA (tRNA) molecules. The large subunit (LSU) contains the ribosomal catalytic site termed the peptidyl transferase center (PTC), which catalyzes the formation of peptide bonds, thereby polymerizing the amino acids delivered by tRNAs into a polypeptide chain. The nascent polypeptides leave the ribosome through a tunnel in the LSU and interact with protein factors that function in enzymatic processing, targeting, and the membrane insertion of nascent chains at the exit of the ribosomal tunnel. eS10 plays a role as a positive regulator of the GCN2 kinase activity by stimulating GCN1-mediated GCN2 activation. In Saccharomyces cerevisiae (strain ATCC 204508 / S288c) (Baker's yeast), this protein is Small ribosomal subunit protein eS10A.